The sequence spans 546 residues: Chaperonin GroEL (546 aa).

Residues 30 to 33, lysine 51, 87 to 91, glycine 415, 479 to 481, and aspartate 495 each bind ATP; these read TLGP, DGTTT, and NAA.

This sequence belongs to the chaperonin (HSP60) family. In terms of assembly, forms a cylinder of 14 subunits composed of two heptameric rings stacked back-to-back. Interacts with the co-chaperonin GroES.

The protein localises to the cytoplasm. The catalysed reaction is ATP + H2O + a folded polypeptide = ADP + phosphate + an unfolded polypeptide.. Together with its co-chaperonin GroES, plays an essential role in assisting protein folding. The GroEL-GroES system forms a nano-cage that allows encapsulation of the non-native substrate proteins and provides a physical environment optimized to promote and accelerate protein folding. This is Chaperonin GroEL from Xanthomonas campestris pv. phaseoli.